A 539-amino-acid chain; its full sequence is Probable methionine--tRNA ligase, mitochondrial (539 aa).

The 'HIGH' region motif lies at 28-38 (FYVNAAPHLGH). A 'KMSKS' region motif is present at residues 326–330 (KMSKS). Residue Lys-329 participates in ATP binding.

The protein belongs to the class-I aminoacyl-tRNA synthetase family.

The protein localises to the mitochondrion matrix. It carries out the reaction tRNA(Met) + L-methionine + ATP = L-methionyl-tRNA(Met) + AMP + diphosphate. This Schizosaccharomyces pombe (strain 972 / ATCC 24843) (Fission yeast) protein is Probable methionine--tRNA ligase, mitochondrial.